The following is a 1017-amino-acid chain: Multiple C2 domain and transmembrane region protein 14 (1017 aa).

The C2 1 domain maps to 1–110 (MADNVLRKLI…ASAGSETLVY (110 aa)). Residues 139–231 (AAPAATEPKP…PAEVKNPPIP (93 aa)) form a disordered region. Over residues 141 to 153 (PAATEPKPEAAAA) the composition is skewed to low complexity. The segment covering 154–213 (TEEKPPEIAKAEDGKKETEAAKTEEKKEGDKKEEEKPKEEAKPDEKKPDAPPDTKAKKPD) has biased composition (basic and acidic residues). Residues 217 to 231 (APPPPPAEVKNPPIP) show a composition bias toward pro residues. 3 consecutive C2 domains span residues 258–387 (DLEL…PQWY), 420–554 (DSGG…SRWF), and 587–714 (VTSD…LNSY). Residues D296, N299, D352, T355, and E359 each contribute to the Ca(2+) site. The next 2 membrane-spanning stretches (helical) occupy residues 851-871 (VAIV…AFLI) and 957-977 (ATCI…IVPF).

Belongs to the MCTP family. Ca(2+) is required as a cofactor. In terms of tissue distribution, expressed in incipient leaf primordia and in roots meristems. Observed in flowers.

It localises to the membrane. Its subcellular location is the vesicle. The protein localises to the golgi apparatus membrane. May function as a signaling molecule by regulating the trafficking of other regulators. In Arabidopsis thaliana (Mouse-ear cress), this protein is Multiple C2 domain and transmembrane region protein 14.